We begin with the raw amino-acid sequence, 1302 residues long: Multidrug resistance protein homolog 65 (1302 aa).

The segment at 1 to 23 is disordered; that stretch reads MERDEVSTSSSEGKSQEEAPMAE. Residues 1 to 48 are Cytoplasmic-facing; the sequence is MERDEVSTSSSEGKSQEEAPMAEGLEPTEPIAFLKLFRFSTYGEIGWL. The ABC transmembrane type-1 1 domain occupies 48–369; that stretch reads LFFGFIMCCI…TAPFLESFAT (322 aa). Residues 49-69 traverse the membrane as a helical segment; that stretch reads FFGFIMCCIKALTLPAVVIIY. Over 70–118 the chain is Extracellular; it reads SEFTSMLVDRAMQFGTSSNVHALPLFGGGKTLTNASREENNEALYDDSI. Asn103 carries an N-linked (GlcNAc...) asparagine glycan. A helical transmembrane segment spans residues 119–147; it reads SYGILLTIASVVMFISGIFSVDVFNMVAL. Residues 148-194 lie on the Cytoplasmic side of the membrane; sequence RQVTRMRIKLFSSVIRQDIGWHDLASKQNFTQSMVDDVEKIRDGISE. The chain crosses the membrane as a helical span at residues 195-215; that stretch reads KVGHFVYLVVGFIITVAISFS. Residues 216 to 223 lie on the Extracellular side of the membrane; that stretch reads YGWKLTLA. Residues 224-242 form a helical membrane-spanning segment; the sequence is VSSYIPLVILLNYYVAKFQ. At 243–302 the chain is on the cytoplasmic side; that stretch reads GKLTAREQESYAGAGNLAEEILSSIRTVVSFGGEKSEVQRYENFLVPARKASQWKGAFSG. Residues 303-323 traverse the membrane as a helical segment; sequence LSDAVLKSMLYLSCAGAFWYG. At 324-341 the chain is on the extracellular side; sequence VNLIIDDRNVENKEYTPA. Residues 342–362 traverse the membrane as a helical segment; the sequence is ILMIAFFGIIVGADNIARTAP. Topologically, residues 363–731 are cytoplasmic; the sequence is FLESFATARG…LQLAKQEWCY (369 aa). Positions 405–641 constitute an ABC transporter 1 domain; it reads VEFQDVFFRY…EGAYYNMVRA (237 aa). ATP is bound at residue 440–447; it reads GSSGCGKS. The helical transmembrane segment at 732-753 threads the bilayer; that stretch reads LILGTISAVAVGFLYPAFAVIF. The 289-residue stretch at 732–1020 folds into the ABC transmembrane type-1 2 domain; sequence LILGTISAVA…SLAFTPAFSA (289 aa). The Extracellular segment spans residues 754–776; that stretch reads GEFYAALAEKDPEDALRRTAVLS. A helical membrane pass occupies residues 777–798; it reads WACLGLAFLTGLVCFLQTYLFN. At 799-852 the chain is on the cytoplasmic side; the sequence is YAGIWLTTRMRAMTFNAMVNQEVGWFDDENNSVGALSARLSGEAVDIQGAIGYP. Residues 853–873 traverse the membrane as a helical segment; the sequence is LSGMIQALSNFISSVSVAMYY. Asn874 is a topological domain (extracellular). The chain crosses the membrane as a helical span at residues 875 to 894; the sequence is WKLALLCLANCPIIVGSVIL. Residues 895–956 lie on the Cytoplasmic side of the membrane; that stretch reads EAKMMSNAVV…VEVLIRQKLR (62 aa). Residues 957–977 form a helical membrane-spanning segment; the sequence is WRGVLNSTMQASAFFAYAVAL. The Extracellular portion of the chain corresponds to 978 to 993; the sequence is CYGGVLVSEGQLPFQD. Residues 994-1014 traverse the membrane as a helical segment; that stretch reads IIKVSETLLYGSMMLAQSLAF. Over 1015 to 1302 the chain is Cytoplasmic; the sequence is TPAFSAALIA…AKLHKTQKDH (288 aa). Positions 1059–1298 constitute an ABC transporter 2 domain; that stretch reads VRYRGIQFRY…GGIYAKLHKT (240 aa). 1094–1101 contacts ATP; that stretch reads GHSGCGKS.

Belongs to the ABC transporter superfamily. ABCB family. Multidrug resistance exporter (TC 3.A.1.201) subfamily.

The protein resides in the membrane. It carries out the reaction ATP + H2O + xenobioticSide 1 = ADP + phosphate + xenobioticSide 2.. The sequence is that of Multidrug resistance protein homolog 65 (Mdr65) from Drosophila melanogaster (Fruit fly).